The following is a 391-amino-acid chain: 8-amino-7-oxononanoate synthase (391 aa).

A pyridoxal 5'-phosphate-binding site is contributed by 108–109 (GF). His133 serves as a coordination point for substrate. 3 residues coordinate pyridoxal 5'-phosphate: Ser180, His208, and Thr236. Lys239 carries the post-translational modification N6-(pyridoxal phosphate)lysine. Residue Thr353 participates in substrate binding.

Belongs to the class-II pyridoxal-phosphate-dependent aminotransferase family. BioF subfamily. Homodimer. It depends on pyridoxal 5'-phosphate as a cofactor.

The catalysed reaction is 6-carboxyhexanoyl-[ACP] + L-alanine + H(+) = (8S)-8-amino-7-oxononanoate + holo-[ACP] + CO2. It functions in the pathway cofactor biosynthesis; biotin biosynthesis. Functionally, catalyzes the decarboxylative condensation of pimeloyl-[acyl-carrier protein] and L-alanine to produce 8-amino-7-oxononanoate (AON), [acyl-carrier protein], and carbon dioxide. The protein is 8-amino-7-oxononanoate synthase of Thermosipho melanesiensis (strain DSM 12029 / CIP 104789 / BI429).